A 76-amino-acid chain; its full sequence is Small proline-rich protein 2E (76 aa).

3 consecutive repeat copies span residues 21–29 (KKCPEPCPH), 30–38 (PQCPEPCPP), and 39–47 (PKCPEPCPE). The segment at 21–47 (KKCPEPCPHPQCPEPCPPPKCPEPCPE) is 3 X 9 AA approximate tandem repeats. Positions 52–76 (PSYQQKCPPVQPPPPCQQKCPPKSK) are disordered.

This sequence belongs to the cornifin (SPRR) family. As to expression, expressed in uterus.

The protein localises to the cytoplasm. Functionally, cross-linked envelope protein of keratinocytes. It is a keratinocyte protein that first appears in the cell cytosol, but ultimately becomes cross-linked to membrane proteins by transglutaminase. All that results in the formation of an insoluble envelope beneath the plasma membrane. This is Small proline-rich protein 2E (Sprr2e) from Mus musculus (Mouse).